A 288-amino-acid chain; its full sequence is Probable ketoamine kinase VP1481 (288 aa).

Asparagine 92–leucine 94 contributes to the ATP binding site. Aspartate 195 acts as the Proton acceptor in catalysis.

Belongs to the fructosamine kinase family.

In terms of biological role, ketoamine kinase that phosphorylates ketoamines on the third carbon of the sugar moiety to generate ketoamine 3-phosphate. The polypeptide is Probable ketoamine kinase VP1481 (Vibrio parahaemolyticus serotype O3:K6 (strain RIMD 2210633)).